The sequence spans 453 residues: Choline kinase alpha (453 aa).

A disordered region spans residues 22-81; the sequence is CGGNAAPTPGVGQQRDAAGELESKQLGGRTQPLALPPPPPPPLPLPPPPSPPLADEQPEP. Residues 55-73 are compositionally biased toward pro residues; that stretch reads ALPPPPPPPLPLPPPPSPP. Ser71 carries the phosphoserine modification. ATP is bound by residues 113-119, Arg142, and 203-209; these read RGGLSNM and QFIPSRR. 115 to 117 contacts phosphocholine; the sequence is GLS. Lys243 is modified (N6-acetyllysine). At Ser275 the chain carries Phosphoserine. Residues Gln304 and Asp326 each contribute to the ATP site.

Belongs to the choline/ethanolamine kinase family. In terms of assembly, homodimer. Heterodimer with CHKB. Monomer; acetylation by KAT5 promotes dissociation of the homodimer and monomerization. Post-translationally, phosphorylated at Ser-275 by AMPK in response to glucose deprivation, leading to localization to lipid droplets. In terms of processing, acetylated by KAT5 at Lys-243 following phosphorylation by AMPK, leading to monomerization and conversion into a tyrosine-protein kinase. Expressed ubiquitously with the highest level in testis.

It localises to the cytoplasm. Its subcellular location is the cytosol. The protein localises to the lipid droplet. The catalysed reaction is choline + ATP = phosphocholine + ADP + H(+). It catalyses the reaction ethanolamine + ATP = phosphoethanolamine + ADP + H(+). It carries out the reaction L-tyrosyl-[protein] + ATP = O-phospho-L-tyrosyl-[protein] + ADP + H(+). Its pathway is phospholipid metabolism; phosphatidylcholine biosynthesis; phosphocholine from choline: step 1/1. It participates in phospholipid metabolism; phosphatidylethanolamine biosynthesis; phosphatidylethanolamine from ethanolamine: step 1/3. Functionally, plays a key role in phospholipid biosynthesis by catalyzing the phosphorylation of free choline to phosphocholine, the first step in phosphatidylcholine biosynthesis. Also phosphorylates ethanolamine, thereby contributing to phosphatidylethanolamine biosynthesis. Has higher activity with choline. Its function is as follows. This isoform plays a key role in lipolysis of lipid droplets following glucose deprivation. In response to glucose deprivation, phosphorylated by AMPK, promoting localization to lipid droplets. Phosphorylation is followed by acetylation by KAT5, leading to dissociation of the homodimer into a monomer. Monomeric CHKA isoform 1 is converted into a tyrosine-protein kinase, which phosphorylates lipid droplet structural proteins PLIN2 and PLIN3, leading to lipolysis of lipid droplets. This chain is Choline kinase alpha (Chka), found in Mus musculus (Mouse).